The chain runs to 199 residues: Oleosin 21.2 kDa (199 aa).

Residues 1-14 show a composition bias toward basic and acidic residues; that stretch reads MADTHRVDRTDRHF. Positions 1-31 are disordered; that stretch reads MADTHRVDRTDRHFQFQSPYEGGRGQGQYEG. A2 bears the N-acetylalanine mark. Residues 2-56 are polar; sequence ADTHRVDRTDRHFQFQSPYEGGRGQGQYEGDRGYGGGGYKSMMPESGPSSTQVLS. A compositionally biased stretch (gly residues) spans 22–31; the sequence is GGRGQGQYEG. The next 3 membrane-spanning stretches (helical) occupy residues 51–71, 72–92, and 96–116; these read STQV…LALA, GLLL…FLLF, and IVPA…SGMF. Residues 57–128 are hydrophobic; it reads LLIGVPVVGS…TGLSSISWVM (72 aa). The disordered stretch occupies residues 159-199; the sequence is KGKEMGQHVQNKAQDVKQYDISKPHDTTTKGHETQGRTTAA. Residues 172 to 193 show a composition bias toward basic and acidic residues; that stretch reads QDVKQYDISKPHDTTTKGHETQ.

The protein belongs to the oleosin family.

It is found in the lipid droplet. Its subcellular location is the membrane. Its function is as follows. May have a structural role to stabilize the lipid body during desiccation of the seed by preventing coalescence of the oil. Probably interacts with both lipid and phospholipid moieties of lipid bodies. May also provide recognition signals for specific lipase anchorage in lipolysis during seedling growth. The protein is Oleosin 21.2 kDa of Arabidopsis thaliana (Mouse-ear cress).